The primary structure comprises 254 residues: Ribosomal RNA small subunit methyltransferase G (254 aa).

Residues Gly-84, Phe-89, 136-137 (VE), and Arg-155 each bind S-adenosyl-L-methionine. The tract at residues 231-254 (HLYPRAVGIPSKQPLGIQADDNRS) is disordered.

The protein belongs to the methyltransferase superfamily. RNA methyltransferase RsmG family.

Its subcellular location is the cytoplasm. Functionally, specifically methylates the N7 position of a guanine in 16S rRNA. This is Ribosomal RNA small subunit methyltransferase G from Synechococcus sp. (strain WH7803).